The sequence spans 265 residues: Polyprenol monophosphomannose synthase (265 aa).

The span at 1–10 (MSVPGEREQG) shows a compositional bias: basic and acidic residues. The interval 1–21 (MSVPGEREQGAGEDPATVRPT) is disordered.

This sequence belongs to the glycosyltransferase 2 family. In terms of assembly, interacts with Lnt (also called Ppm2, AC A0QZ13) upon coexpression in E.coli, which increases the PPM synthase activity of this protein.

It is found in the cytoplasm. The enzyme catalyses a di-trans,poly-cis-dolichyl phosphate + GDP-alpha-D-mannose = a di-trans,poly-cis-dolichyl beta-D-mannosyl phosphate + GDP. In terms of biological role, transfers mannose from GDP-mannose to lipid acceptors to form polyprenol monophosphomannose (PPM); catalytic activity in vitro is enhanced by Lnt (AC A0QZ13). PMM is an alkai-stable sugar donor which adds mannose-phosphate residues to triacylated-PIM2, eventually leading to generation of the cell wall glycolipid lipoglycan modulins lipoarabinomannan (LAM) and lipomannan (LM). The sequence is that of Polyprenol monophosphomannose synthase from Mycolicibacterium smegmatis (strain ATCC 700084 / mc(2)155) (Mycobacterium smegmatis).